We begin with the raw amino-acid sequence, 169 residues long: Disulfide bond formation protein B 1 (169 aa).

Topologically, residues 1–14 (MSDNTLYLRREKRF) are cytoplasmic. A helical transmembrane segment spans residues 15–31 (LVLLGIICLALIGGALY). The Periplasmic segment spans residues 32–49 (MQIVLGEAPCPLCILQRY). The cysteines at positions 41 and 44 are disulfide-linked. The chain crosses the membrane as a helical span at residues 50 to 64 (ALLFIAIFAFIGAAM). At 65 to 71 (SGRRGVT) the chain is on the cytoplasmic side. Residues 72-89 (VCETLVTLSALGGIAAAG) form a helical membrane-spanning segment. Residues 90-144 (RHVWILAHPSDSCGIDVLQPIVDGLPLATLFPTGFQVSGFCTTPYPPVLGLSLAQ) lie on the Periplasmic side of the membrane. A disulfide bridge links cysteine 102 with cysteine 130. Residues 145 to 163 (WALAAFVLTAVLVPACIIR) traverse the membrane as a helical segment. Topologically, residues 164–169 (NRRKPY) are cytoplasmic.

The protein belongs to the DsbB family.

The protein localises to the cell inner membrane. Functionally, required for disulfide bond formation in some periplasmic proteins. Acts by oxidizing the DsbA protein. The chain is Disulfide bond formation protein B 1 from Pseudomonas savastanoi pv. phaseolicola (strain 1448A / Race 6) (Pseudomonas syringae pv. phaseolicola (strain 1448A / Race 6)).